Reading from the N-terminus, the 985-residue chain is Regulator of telomere elongation helicase 1 homolog (985 aa).

Positions 7–303 (AGIPVHFPFE…QDMAGDEPKD (297 aa)) constitute a Helicase ATP-binding domain. 42-49 (SPTGTGKT) contacts ATP. 4 residues coordinate [4Fe-4S] cluster: Cys-146, Cys-164, Cys-173, and Cys-209. A DEAH box motif is present at residues 252 to 255 (DEAH). Phosphothreonine is present on Thr-874.

It belongs to the helicase family. RAD3/XPD subfamily.

It is found in the nucleus. The enzyme catalyses ATP + H2O = ADP + phosphate + H(+). A probable ATP-dependent DNA helicase implicated in DNA repair and the maintenance of genomic stability. Acts as an anti-recombinase to counteract toxic recombination and limit crossover during meiosis. Regulates meiotic recombination and crossover homeostasis by physically dissociating strand invasion events and thereby promotes noncrossover repair by meiotic synthesis dependent strand annealing (SDSA) as well as disassembly of D loop recombination intermediates. In Drosophila erecta (Fruit fly), this protein is Regulator of telomere elongation helicase 1 homolog.